Here is a 32-residue protein sequence, read N- to C-terminus: Ranatuerin-2La (32 aa).

The cysteines at positions 27 and 32 are disulfide-linked.

Expressed by the skin glands.

Its subcellular location is the secreted. Functionally, antibacterial activity against Gram-positive bacterium S.aureus and Gram-negative bacterium E.coli. Weak activity against C.albicans. In Rana luteiventris (Columbia spotted frog), this protein is Ranatuerin-2La.